The chain runs to 296 residues: Formamidopyrimidine-DNA glycosylase (296 aa).

Residue proline 2 is the Schiff-base intermediate with DNA of the active site. The active-site Proton donor is glutamate 3. The Proton donor; for beta-elimination activity role is filled by lysine 58. DNA-binding residues include histidine 106, arginine 125, and lysine 168. Residues arginine 259–valine 295 form an FPG-type zinc finger. The active-site Proton donor; for delta-elimination activity is arginine 285.

Belongs to the FPG family. Monomer. It depends on Zn(2+) as a cofactor.

It catalyses the reaction Hydrolysis of DNA containing ring-opened 7-methylguanine residues, releasing 2,6-diamino-4-hydroxy-5-(N-methyl)formamidopyrimidine.. The enzyme catalyses 2'-deoxyribonucleotide-(2'-deoxyribose 5'-phosphate)-2'-deoxyribonucleotide-DNA = a 3'-end 2'-deoxyribonucleotide-(2,3-dehydro-2,3-deoxyribose 5'-phosphate)-DNA + a 5'-end 5'-phospho-2'-deoxyribonucleoside-DNA + H(+). Functionally, involved in base excision repair of DNA damaged by oxidation or by mutagenic agents. Acts as a DNA glycosylase that recognizes and removes damaged bases. Has a preference for oxidized purines, such as 7,8-dihydro-8-oxoguanine (8-oxoG). Has AP (apurinic/apyrimidinic) lyase activity and introduces nicks in the DNA strand. Cleaves the DNA backbone by beta-delta elimination to generate a single-strand break at the site of the removed base with both 3'- and 5'-phosphates. The chain is Formamidopyrimidine-DNA glycosylase from Methylorubrum populi (strain ATCC BAA-705 / NCIMB 13946 / BJ001) (Methylobacterium populi).